We begin with the raw amino-acid sequence, 239 residues long: uncharacterized protein (239 aa).

The next 7 membrane-spanning stretches (helical) occupy residues 20 to 40 (ILIW…WLVL), 48 to 68 (FSSV…LGLL), 80 to 100 (WILL…GFHF), 106 to 126 (IYAM…TYLF), 143 to 163 (LILL…EILV), 164 to 184 (MIAG…DILH), and 192 to 212 (IPGA…VLYF).

Belongs to the cytomegalovirus US12 family.

The protein resides in the membrane. This is an uncharacterized protein from Homo sapiens (Human).